A 699-amino-acid chain; its full sequence is Sarcoplasmic reticulum histidine-rich calcium-binding protein (699 aa).

An N-terminal signal peptide occupies residues Met-1–Gln-28. The disordered stretch occupies residues Ser-50 to Val-95. Residues Ala-55–Glu-89 show a composition bias toward basic and acidic residues. Position 76 is a phosphothreonine; by FAM20C (Thr-76). Repeat copies occupy residues His-106 to Glu-121, His-134 to Ser-154, His-155 to Ile-177, His-180 to Ala-213, His-214 to Ser-237, His-238 to Ala-270, His-271 to Ser-294, His-295 to Ala-318, His-319 to Asp-342, and His-343 to Gly-365. The 6 X approximate tandem repeats stretch occupies residues His-106–Asp-342. Residues His-106–Gly-365 form a 4 X tandem repeats, acidic region. Residues Ser-119 and Ser-145 each carry the phosphoserine; by FAM20C modification. Positions His-127 to Glu-617 are disordered. Composition is skewed to basic residues over residues His-148–His-158 and His-173–Arg-183. The segment covering Gly-187–Ser-206 has biased composition (acidic residues). The span at His-231 to Gln-241 shows a compositional bias: basic residues. Residues Glu-244–Ser-263 show a composition bias toward acidic residues. The span at His-288 to Arg-298 shows a compositional bias: basic residues. Positions Glu-302–Ser-311 are enriched in acidic residues. Over residues His-324–Glu-335 the composition is skewed to basic and acidic residues. Ser-333 is modified (phosphoserine). Residues His-336–Gly-347 show a composition bias toward basic residues. Residues Ser-358 and Ser-431 each carry the phosphoserine; by FAM20C modification. Basic and acidic residues-rich tracts occupy residues Ser-444–His-463 and Val-470–Asp-481. Phosphoserine; by FAM20C is present on Ser-494. The segment covering Gln-504–Asp-515 has biased composition (basic and acidic residues). Acidic residues-rich tracts occupy residues Gln-532 to Arg-551 and Ser-567 to Glu-581. Ser-567 bears the Phosphoserine; by FAM20C mark. The segment at Cys-627 to Cys-673 is metal-binding.

It belongs to the HRC family.

It localises to the sarcoplasmic reticulum lumen. Functionally, may play a role in the regulation of calcium sequestration or release in the SR of skeletal and cardiac muscle. The polypeptide is Sarcoplasmic reticulum histidine-rich calcium-binding protein (HRC) (Homo sapiens (Human)).